The following is a 229-amino-acid chain: Protein MC132 (229 aa).

Interacts with host RELA (via RHD domain), ELOB, ELOC and CUL5; these interactions induce the proteasomal degradation of host RELA.

The protein resides in the host cytoplasm. Functionally, inhibits host NF-kappa-B activation stimulated by IL-1 and multiple PRR viral detection pathways. Targets host NF-kappa-B component RELA/p65 for ubiquitin-dependent proteasomal degradation. This is Protein MC132 (MC132) from Homo sapiens (Human).